Here is a 66-residue protein sequence, read N- to C-terminus: Large ribosomal subunit protein uL29 (66 aa).

This sequence belongs to the universal ribosomal protein uL29 family.

This Geobacillus kaustophilus (strain HTA426) protein is Large ribosomal subunit protein uL29.